Reading from the N-terminus, the 327-residue chain is GTPase Obg (327 aa).

The region spanning 1–159 is the Obg domain; sequence MQFIDQANII…WEVQLELKLL (159 aa). An OBG-type G domain is found at 160 to 327; the sequence is AEVGIIGLPN…SLLFEVWKRI (168 aa). ATP-binding positions include 166–173, 191–195, 213–216, 280–283, and 309–311; these read GLPNAGKS, FTTLI, DIPG, NKME, and SSS. Residues Ser173 and Thr193 each contribute to the Mg(2+) site.

It belongs to the TRAFAC class OBG-HflX-like GTPase superfamily. OBG GTPase family. In terms of assembly, monomer. Mg(2+) serves as cofactor.

The protein resides in the cytoplasm. An essential GTPase which binds GTP, GDP and possibly (p)ppGpp with moderate affinity, with high nucleotide exchange rates and a fairly low GTP hydrolysis rate. Plays a role in control of the cell cycle, stress response, ribosome biogenesis and in those bacteria that undergo differentiation, in morphogenesis control. The chain is GTPase Obg from Prochlorococcus marinus (strain MIT 9312).